Consider the following 230-residue polypeptide: Exosome complex component Rrp4 (230 aa).

One can recognise an S1 motif domain in the interval 60 to 129 (NDKVIGKVID…EIKESWLSLK (70 aa)). A KH domain is found at 137 to 195 (EEGSIIYIKAPKVPRVIGKAGNMINMIKSETNTKIIVGQNGLIWIDGEPENVDLAINAI).

The protein belongs to the RRP4 family. As to quaternary structure, component of the archaeal exosome complex. Forms a trimer of Rrp4 and/or Csl4 subunits. The trimer associates with a hexameric ring-like arrangement composed of 3 Rrp41-Rrp42 heterodimers.

The protein resides in the cytoplasm. Its function is as follows. Non-catalytic component of the exosome, which is a complex involved in RNA degradation. Increases the RNA binding and the efficiency of RNA degradation. Confers strong poly(A) specificity to the exosome. This is Exosome complex component Rrp4 from Picrophilus torridus (strain ATCC 700027 / DSM 9790 / JCM 10055 / NBRC 100828 / KAW 2/3).